We begin with the raw amino-acid sequence, 296 residues long: Ribosomal protein L11 methyltransferase (296 aa).

Thr-151, Gly-172, Asp-194, and Asn-233 together coordinate S-adenosyl-L-methionine.

Belongs to the methyltransferase superfamily. PrmA family.

Its subcellular location is the cytoplasm. The catalysed reaction is L-lysyl-[protein] + 3 S-adenosyl-L-methionine = N(6),N(6),N(6)-trimethyl-L-lysyl-[protein] + 3 S-adenosyl-L-homocysteine + 3 H(+). Its function is as follows. Methylates ribosomal protein L11. The sequence is that of Ribosomal protein L11 methyltransferase from Dechloromonas aromatica (strain RCB).